We begin with the raw amino-acid sequence, 274 residues long: Ribosomal RNA small subunit methyltransferase A (274 aa).

H15, L17, G42, E64, D89, and N109 together coordinate S-adenosyl-L-methionine.

Belongs to the class I-like SAM-binding methyltransferase superfamily. rRNA adenine N(6)-methyltransferase family. RsmA subfamily.

It localises to the cytoplasm. It carries out the reaction adenosine(1518)/adenosine(1519) in 16S rRNA + 4 S-adenosyl-L-methionine = N(6)-dimethyladenosine(1518)/N(6)-dimethyladenosine(1519) in 16S rRNA + 4 S-adenosyl-L-homocysteine + 4 H(+). Its function is as follows. Specifically dimethylates two adjacent adenosines (A1518 and A1519) in the loop of a conserved hairpin near the 3'-end of 16S rRNA in the 30S particle. May play a critical role in biogenesis of 30S subunits. The sequence is that of Ribosomal RNA small subunit methyltransferase A from Synechococcus sp. (strain RCC307).